Here is an 817-residue protein sequence, read N- to C-terminus: Anaphase-promoting complex subunit 4 (817 aa).

Y469 is subject to Phosphotyrosine. Phosphoserine is present on residues S757 and S758. A Glycyl lysine isopeptide (Lys-Gly) (interchain with G-Cter in SUMO2) cross-link involves residue K772. Residues S777 and S779 each carry the phosphoserine modification. K798 is covalently cross-linked (Glycyl lysine isopeptide (Lys-Gly) (interchain with G-Cter in SUMO2)).

It belongs to the APC4 family. The mammalian APC/C is composed at least of 14 distinct subunits ANAPC1, ANAPC2, CDC27/APC3, ANAPC4, ANAPC5, CDC16/APC6, ANAPC7, CDC23/APC8, ANAPC10, ANAPC11, CDC26/APC12, ANAPC13, ANAPC15 and ANAPC16 that assemble into a complex of at least 19 chains with a combined molecular mass of around 1.2 MDa; APC/C interacts with FZR1 and FBXO5. In the context of the APC/C complex, directly interacts with UBE2S.

It localises to the nucleus. Its pathway is protein modification; protein ubiquitination. Component of the anaphase promoting complex/cyclosome (APC/C), a cell cycle-regulated E3 ubiquitin ligase that controls progression through mitosis and the G1 phase of the cell cycle. The APC/C complex acts by mediating ubiquitination and subsequent degradation of target proteins: it mainly mediates the formation of 'Lys-11'-linked polyubiquitin chains and, to a lower extent, the formation of 'Lys-48'- and 'Lys-63'-linked polyubiquitin chains. The APC/C complex catalyzes assembly of branched 'Lys-11'-/'Lys-48'-linked branched ubiquitin chains on target proteins. This Pongo abelii (Sumatran orangutan) protein is Anaphase-promoting complex subunit 4 (ANAPC4).